The following is a 272-amino-acid chain: Cyclase-like protein 2 (272 aa).

An N-terminal signal peptide occupies residues 1 to 17; sequence MAHLATVVLLLVAAARQ.

Belongs to the Cyclase 1 superfamily. In terms of tissue distribution, highly expressed in leaf sheaths and flag leaves. Expressed in roots, stems, leaf collars, glumes, young panicles and pistils.

It is found in the secreted. The protein localises to the extracellular space. The protein resides in the extracellular matrix. Its function is as follows. May be involved in response to stresses. This is Cyclase-like protein 2 from Oryza sativa subsp. japonica (Rice).